The sequence spans 590 residues: Arginine--tRNA ligase (590 aa).

The short motif at 130–140 is the 'HIGH' region element; it reads PNIAKEMHVGH.

The protein belongs to the class-I aminoacyl-tRNA synthetase family. Monomer.

It is found in the cytoplasm. It catalyses the reaction tRNA(Arg) + L-arginine + ATP = L-arginyl-tRNA(Arg) + AMP + diphosphate. This Synechococcus sp. (strain CC9311) protein is Arginine--tRNA ligase.